The following is a 518-amino-acid chain: ORC1-type DNA replication protein 7 (518 aa).

Position 94-98 (94-98) interacts with ATP; the sequence is TGKTA. Residues 165-196 are disordered; the sequence is DDDPNALEIGGSPGDDRTGNESSEGSDVSDSF. Positions 186-196 are enriched in low complexity; the sequence is SSEGSDVSDSF. Tyr-318 and Arg-330 together coordinate ATP.

This sequence belongs to the CDC6/cdc18 family.

Its function is as follows. Involved in regulation of DNA replication. Required to initiate DNA replication of the circular chromosome at a nearby autonomously replicating sequence (ARS) oriC1. The polypeptide is ORC1-type DNA replication protein 7 (orc7) (Halobacterium salinarum (strain ATCC 700922 / JCM 11081 / NRC-1) (Halobacterium halobium)).